The chain runs to 220 residues: Octanoyltransferase (220 aa).

A BPL/LPL catalytic domain is found at 27-208; the sequence is PGTADEIWLC…QLARAHGHAV (182 aa). Substrate-binding positions include 66-73, 139-141, and 152-154; these read RGGQVTYH, ALG, and GLA. C170 (acyl-thioester intermediate) is an active-site residue.

Belongs to the LipB family.

Its subcellular location is the cytoplasm. It carries out the reaction octanoyl-[ACP] + L-lysyl-[protein] = N(6)-octanoyl-L-lysyl-[protein] + holo-[ACP] + H(+). It functions in the pathway protein modification; protein lipoylation via endogenous pathway; protein N(6)-(lipoyl)lysine from octanoyl-[acyl-carrier-protein]: step 1/2. In terms of biological role, catalyzes the transfer of endogenously produced octanoic acid from octanoyl-acyl-carrier-protein onto the lipoyl domains of lipoate-dependent enzymes. Lipoyl-ACP can also act as a substrate although octanoyl-ACP is likely to be the physiological substrate. The chain is Octanoyltransferase from Bordetella parapertussis (strain 12822 / ATCC BAA-587 / NCTC 13253).